We begin with the raw amino-acid sequence, 187 residues long: Segregation and condensation protein B (187 aa).

This sequence belongs to the ScpB family. In terms of assembly, homodimer. Homodimerization may be required to stabilize the binding of ScpA to the Smc head domains. Component of a cohesin-like complex composed of ScpA, ScpB and the Smc homodimer, in which ScpA and ScpB bind to the head domain of Smc. The presence of the three proteins is required for the association of the complex with DNA.

It localises to the cytoplasm. Its function is as follows. Participates in chromosomal partition during cell division. May act via the formation of a condensin-like complex containing Smc and ScpA that pull DNA away from mid-cell into both cell halves. The sequence is that of Segregation and condensation protein B from Agathobacter rectalis (strain ATCC 33656 / DSM 3377 / JCM 17463 / KCTC 5835 / VPI 0990) (Eubacterium rectale).